The primary structure comprises 502 residues: ATP synthase subunit alpha (502 aa).

170–177 (GDRKTGKT) is a binding site for ATP.

This sequence belongs to the ATPase alpha/beta chains family. In terms of assembly, F-type ATPases have 2 components, CF(1) - the catalytic core - and CF(0) - the membrane proton channel. CF(1) has five subunits: alpha(3), beta(3), gamma(1), delta(1), epsilon(1). CF(0) has four main subunits: a, b, b' and c.

It is found in the cellular thylakoid membrane. The enzyme catalyses ATP + H2O + 4 H(+)(in) = ADP + phosphate + 5 H(+)(out). Produces ATP from ADP in the presence of a proton gradient across the membrane. The alpha chain is a regulatory subunit. The protein is ATP synthase subunit alpha of Microcystis aeruginosa (strain NIES-843 / IAM M-2473).